Reading from the N-terminus, the 368-residue chain is Protein mab-21-like 3 (368 aa).

It belongs to the mab-21 family.

This chain is Protein mab-21-like 3 (mab21L3), found in Xenopus laevis (African clawed frog).